Reading from the N-terminus, the 310-residue chain is MKTLIRKFSRTAITVVLVILAFIAIFNAWVYYTESPWTRDARFSADVVAIAPDVSGLITQVNVHDNQLVKKGQILFTIDQPRYQKALEEAQADVAYYQVLAQEKRQEAGRRNRLGVQAMSREEIDQANNVLQTVLHQLAKAQATRDLAKLDLERTVIRAPADGWVTNLNVYTGEFITRGSTAVALVKQNSFYVLAYMEETKLEGGRPGYRAEITPLGSNKVLKGTVDSVAAGVTNASSTRDDKGMATIDSNLEWVRLAQRVPVRIRLDNQQENIWPAGTTATVVVTGKQDRDESQDSFFRKMAHRLREFG.

Residues 12-32 form a helical membrane-spanning segment; the sequence is AITVVLVILAFIAIFNAWVYY.

The protein belongs to the membrane fusion protein (MFP) (TC 8.A.1) family.

It is found in the cell inner membrane. Forms an efflux pump with AaeB. The chain is p-hydroxybenzoic acid efflux pump subunit AaeA from Shigella sonnei (strain Ss046).